The following is a 321-amino-acid chain: Glycerol-3-phosphate dehydrogenase [NAD(P)+] (321 aa).

NADPH is bound by residues Ser10, Phe11, Arg31, Arg32, and Lys104. Residues Lys104 and Gly132 each coordinate sn-glycerol 3-phosphate. Ala136 lines the NADPH pocket. 5 residues coordinate sn-glycerol 3-phosphate: Lys186, Asp238, Ser248, Arg249, and Asn250. The active-site Proton acceptor is the Lys186. Position 249 (Arg249) interacts with NADPH. Position 272 (Glu272) interacts with NADPH.

It belongs to the NAD-dependent glycerol-3-phosphate dehydrogenase family.

It localises to the cytoplasm. It catalyses the reaction sn-glycerol 3-phosphate + NAD(+) = dihydroxyacetone phosphate + NADH + H(+). It carries out the reaction sn-glycerol 3-phosphate + NADP(+) = dihydroxyacetone phosphate + NADPH + H(+). Catalyzes the reduction of the glycolytic intermediate dihydroxyacetone phosphate (DHAP) to sn-glycerol 3-phosphate (G3P). In Methanothermobacter thermautotrophicus (strain ATCC 29096 / DSM 1053 / JCM 10044 / NBRC 100330 / Delta H) (Methanobacterium thermoautotrophicum), this protein is Glycerol-3-phosphate dehydrogenase [NAD(P)+].